The primary structure comprises 368 residues: Ribosomal RNA large subunit methyltransferase M (368 aa).

S-adenosyl-L-methionine is bound by residues S189, 222–225 (CPGG), D241, D261, and D278. K307 serves as the catalytic Proton acceptor.

This sequence belongs to the class I-like SAM-binding methyltransferase superfamily. RNA methyltransferase RlmE family. RlmM subfamily. As to quaternary structure, monomer.

The protein resides in the cytoplasm. The enzyme catalyses cytidine(2498) in 23S rRNA + S-adenosyl-L-methionine = 2'-O-methylcytidine(2498) in 23S rRNA + S-adenosyl-L-homocysteine + H(+). In terms of biological role, catalyzes the 2'-O-methylation at nucleotide C2498 in 23S rRNA. This Yersinia enterocolitica serotype O:8 / biotype 1B (strain NCTC 13174 / 8081) protein is Ribosomal RNA large subunit methyltransferase M.